The following is a 420-amino-acid chain: ATP phosphoribosyltransferase regulatory subunit (420 aa).

Belongs to the class-II aminoacyl-tRNA synthetase family. HisZ subfamily. Heteromultimer composed of HisG and HisZ subunits.

It is found in the cytoplasm. It participates in amino-acid biosynthesis; L-histidine biosynthesis; L-histidine from 5-phospho-alpha-D-ribose 1-diphosphate: step 1/9. Its function is as follows. Required for the first step of histidine biosynthesis. May allow the feedback regulation of ATP phosphoribosyltransferase activity by histidine. This is ATP phosphoribosyltransferase regulatory subunit from Bacillus cereus (strain ATCC 14579 / DSM 31 / CCUG 7414 / JCM 2152 / NBRC 15305 / NCIMB 9373 / NCTC 2599 / NRRL B-3711).